A 432-amino-acid polypeptide reads, in one-letter code: Maltoporin (432 aa).

The first 22 residues, 1–22 (MKKVSVIAAAVAATLAAGSAFA), serve as a signal peptide directing secretion.

The protein belongs to the porin LamB (TC 1.B.3) family. As to quaternary structure, homotrimer formed of three 18-stranded antiparallel beta-barrels, containing three independent channels.

It localises to the cell outer membrane. It carries out the reaction beta-maltose(in) = beta-maltose(out). Functionally, involved in the transport of maltose and maltodextrins. In Vibrio parahaemolyticus serotype O3:K6 (strain RIMD 2210633), this protein is Maltoporin.